The chain runs to 334 residues: Leucine-rich repeat-containing protein 26 (334 aa).

Positions 1 to 30 are cleaved as a signal peptide; the sequence is MRGSFFSRLPPQLSLLLLLLLLLSWRRVWT. Over 31 to 265 the chain is Extracellular; that stretch reads QEHIGTDPSK…QCTQSLAARD (235 aa). Residues 38-75 enclose the LRRNT domain; sequence PSKSPVAPVCPEACSCSPGGKANCSALALPAVPAGLSW. Cystine bridges form between Cys-47-Cys-53 and Cys-51-Cys-61. LRR repeat units follow at residues 76–97, 100–121, 124–145, 148–169, and 172–194; these read QVRSLLLDRNRVSTLPPGAFAD, ALLYLVLRENRLRSVHARAFWG, VLQRLDLSSNQLETLSPGTFTP, ALSFLSLAGNRLALLEPSILGP, and LLRVLSLQDNSLSALEAGLLNSL. The region spanning 205–259 is the LRRCT domain; it reads NPWACSCALRPLCTWLRKHPRPTSETETLLCVSPKLQTLNLLTDFPDNAFKQCTQ. Disulfide bonds link Cys-209–Cys-235 and Cys-211–Cys-257. Residues 266 to 286 form a helical membrane-spanning segment; sequence LAVVYALGPASFLASLAICLA. Residues 287-334 are Cytoplasmic-facing; sequence LGSVLTACGARRRRRRTTVRHLIRRQPDPEGPASLEDVGSPTTTAIQA. Residues 312-334 are disordered; that stretch reads QPDPEGPASLEDVGSPTTTAIQA.

As to quaternary structure, interacts with KCNMA1.

The protein resides in the cell membrane. It localises to the cytoplasm. Its subcellular location is the cytoskeleton. In terms of biological role, auxiliary protein of the large-conductance, voltage and calcium-activated potassium channel (BK alpha). Required for the conversion of BK alpha channels from a high-voltage to a low-voltage activated channel type in non-excitable cells. These are characterized by negative membrane voltages and constant low levels of calcium. The protein is Leucine-rich repeat-containing protein 26 (Lrrc26) of Rattus norvegicus (Rat).